The chain runs to 727 residues: MTVSESSVLDTEVLVGGSAMPNERPGPMEPQSLSQMPEGFPRRSTVANGVRSRASRRFFVVGGALLLSSFAIYEMGAVFSIGGITPLEYLMLALFAINFCWIALAFCSGIAGFLLLLKKPKPNELAQTELHTRTAILMPTYNESPDRVFSAVSVMAEALSQTGHGHAFDWFILSDTTDPEIALLEEQAFLVLRQETHKHSRVYYRRRRKNVARKAGNVADFCRRWGSRYDHLLVLDADSLMESSTITGLAQRMQADPDAGLIQTIPSLINGTTLMARLQQFAARIYGPVIGTGLGWWVQKEGNFWGHNAIIRTEAFMGAAGLPNLKGKPPFGGHILSHDFVEAALIRRAGWSVVIAYDLPGSYEECPPSIVDLAVRDRRWCQGNLQHSRILPTKGLHWVSRLHLMTGIMAYLSSPFWLLLILTGLMLALQAHFIRPEYFTDQFSLFPTWPIMDSDRALRLFYITMVVLFGPKIFGVLLLLKDGKFARSVGGRIKAMFSVLFEVILSALIAPIMMFIHCGAVMSILMGRDSGWSPQRRDDGSMPWLTLIYRHRWHMLAGVMLGYAAILDSLTLLAWMSPALIGLWLAVPISAWTGSIKIGEFFKRIGILATPEERNPAPICIRAQEARAAYQSHIEQPWTLAQLLKDPALMELHLAMVDKQPLRAAGTPIEPVEAIVHVKVHEAQCQQSALALFNRQEMALVLANPLMLRSLQKLPEQFVPEDLVSFC.

Positions 17–41 (GSAMPNERPGPMEPQSLSQMPEGFP) are disordered. 6 consecutive transmembrane segments (helical) span residues 58–80 (FFVVGGALLLSSFAIYEMGAVFS), 95–117 (FAINFCWIALAFCSGIAGFLLLL), 407–429 (GIMAYLSSPFWLLLILTGLMLAL), 457–479 (ALRLFYITMVVLFGPKIFGVLLL), 499–521 (VLFEVILSALIAPIMMFIHCGAV), and 572–594 (LLAWMSPALIGLWLAVPISAWTG).

It belongs to the glycosyltransferase 2 family. OpgH subfamily.

The protein resides in the cell inner membrane. It functions in the pathway glycan metabolism; osmoregulated periplasmic glucan (OPG) biosynthesis. Its function is as follows. Involved in the biosynthesis of osmoregulated periplasmic glucans (OPGs). The chain is Glucans biosynthesis glucosyltransferase H from Shewanella oneidensis (strain ATCC 700550 / JCM 31522 / CIP 106686 / LMG 19005 / NCIMB 14063 / MR-1).